The following is a 173-amino-acid chain: Acireductone dioxygenase (173 aa).

The disordered stretch occupies residues 1–20 (MKVYEYDNSTEDQREDHDSG). His-81, His-83, Glu-87, and His-126 together coordinate Fe(2+). Residues His-81, His-83, Glu-87, and His-126 each coordinate Ni(2+).

Belongs to the acireductone dioxygenase (ARD) family. Fe(2+) is required as a cofactor. The cofactor is Ni(2+).

The protein localises to the cytoplasm. It is found in the nucleus. It catalyses the reaction 1,2-dihydroxy-5-(methylsulfanyl)pent-1-en-3-one + O2 = 4-methylsulfanyl-2-oxobutanoate + formate + 2 H(+). The enzyme catalyses 1,2-dihydroxy-5-(methylsulfanyl)pent-1-en-3-one + O2 = 3-(methylsulfanyl)propanoate + CO + formate + 2 H(+). The protein operates within amino-acid biosynthesis; L-methionine biosynthesis via salvage pathway; L-methionine from S-methyl-5-thio-alpha-D-ribose 1-phosphate: step 5/6. Functionally, catalyzes 2 different reactions between oxygen and the acireductone 1,2-dihydroxy-3-keto-5-methylthiopentene (DHK-MTPene) depending upon the metal bound in the active site. Fe-containing acireductone dioxygenase (Fe-ARD) produces formate and 2-keto-4-methylthiobutyrate (KMTB), the alpha-ketoacid precursor of methionine in the methionine recycle pathway. Ni-containing acireductone dioxygenase (Ni-ARD) produces methylthiopropionate, carbon monoxide and formate, and does not lie on the methionine recycle pathway. The sequence is that of Acireductone dioxygenase from Tuber melanosporum (strain Mel28) (Perigord black truffle).